The primary structure comprises 102 residues: Signal recognition particle 19 kDa protein (102 aa).

It belongs to the SRP19 family. As to quaternary structure, part of the signal recognition particle protein translocation system, which is composed of SRP and FtsY. Archaeal SRP consists of a 7S RNA molecule of 300 nucleotides and two protein subunits: SRP54 and SRP19.

Its subcellular location is the cytoplasm. Functionally, involved in targeting and insertion of nascent membrane proteins into the cytoplasmic membrane. Binds directly to 7S RNA and mediates binding of the 54 kDa subunit of the SRP. The chain is Signal recognition particle 19 kDa protein from Saccharolobus solfataricus (strain ATCC 35092 / DSM 1617 / JCM 11322 / P2) (Sulfolobus solfataricus).